The following is a 461-amino-acid chain: Methylenetetrahydrofolate--tRNA-(uracil-5-)-methyltransferase TrmFO (461 aa).

Position 16–21 (16–21 (GAGLAG)) interacts with FAD.

It belongs to the MnmG family. TrmFO subfamily. It depends on FAD as a cofactor.

The protein localises to the cytoplasm. It catalyses the reaction uridine(54) in tRNA + (6R)-5,10-methylene-5,6,7,8-tetrahydrofolate + NADH + H(+) = 5-methyluridine(54) in tRNA + (6S)-5,6,7,8-tetrahydrofolate + NAD(+). The catalysed reaction is uridine(54) in tRNA + (6R)-5,10-methylene-5,6,7,8-tetrahydrofolate + NADPH + H(+) = 5-methyluridine(54) in tRNA + (6S)-5,6,7,8-tetrahydrofolate + NADP(+). Its function is as follows. Catalyzes the folate-dependent formation of 5-methyl-uridine at position 54 (M-5-U54) in all tRNAs. In Parasynechococcus marenigrum (strain WH8102), this protein is Methylenetetrahydrofolate--tRNA-(uracil-5-)-methyltransferase TrmFO.